The primary structure comprises 347 residues: NADH-ubiquinone oxidoreductase chain 2 (347 aa).

Helical transmembrane passes span 3-23 (PPIL…VMTS), 25-45 (HWML…PILM), 59-79 (YFLT…INLL), 96-116 (ILMT…FWVP), 122-142 (ISLS…LSVL), 149-169 (INPN…GWGG), 178-198 (IMAY…LYNP), 201-221 (MFLN…LFMI), 237-257 (APLI…LPPL), 274-294 (EMII…YFYM), and 323-343 (MIFL…TPMI).

Belongs to the complex I subunit 2 family. In terms of assembly, core subunit of respiratory chain NADH dehydrogenase (Complex I) which is composed of 45 different subunits. Interacts with TMEM242.

It is found in the mitochondrion inner membrane. It catalyses the reaction a ubiquinone + NADH + 5 H(+)(in) = a ubiquinol + NAD(+) + 4 H(+)(out). In terms of biological role, core subunit of the mitochondrial membrane respiratory chain NADH dehydrogenase (Complex I) which catalyzes electron transfer from NADH through the respiratory chain, using ubiquinone as an electron acceptor. Essential for the catalytic activity and assembly of complex I. This is NADH-ubiquinone oxidoreductase chain 2 from Civettictis civetta (African civet).